Reading from the N-terminus, the 284-residue chain is Spermidine synthase (284 aa).

Residues 6-241 (NGWFSEISEF…GSIGFILCSL (236 aa)) enclose the PABS domain. Gln-37 lines the S-adenosyl 3-(methylsulfanyl)propylamine pocket. Tyr-67 contacts putrescine. S-adenosyl 3-(methylsulfanyl)propylamine contacts are provided by residues Gln-68, Asp-92, Glu-112, 143–144 (DG), and Asp-161. Residue Asp-161 is the Proton acceptor of the active site. Putrescine is bound by residues 161–164 (DSSD) and Tyr-229.

The protein belongs to the spermidine/spermine synthase family.

The catalysed reaction is S-adenosyl 3-(methylsulfanyl)propylamine + putrescine = S-methyl-5'-thioadenosine + spermidine + H(+). Its pathway is amine and polyamine biosynthesis; spermidine biosynthesis; spermidine from putrescine: step 1/1. Catalyzes the production of spermidine from putrescine and decarboxylated S-adenosylmethionine (dcSAM). Has a strong preference for putrescine as substrate. This is Spermidine synthase (spsA) from Dictyostelium discoideum (Social amoeba).